The primary structure comprises 1063 residues: Lysine-specific demethylase phf2 (1063 aa).

Residues Pro-5–Thr-56 form a PHD-type zinc finger. Residues Phe-197–Lys-353 enclose the JmjC domain. Thr-246 contributes to the 2-oxoglutarate binding site. Fe cation-binding residues include His-249 and Glu-251. Residues Tyr-259 and Lys-266 each coordinate 2-oxoglutarate. A Fe cation-binding site is contributed by Asn-321. Disordered stretches follow at residues Val-448 to Leu-546, Asn-704 to Ile-761, Gly-773 to Asp-864, and Tyr-879 to Ala-1045. Residues Ser-460–Ser-477 show a composition bias toward low complexity. Basic and acidic residues-rich tracts occupy residues Pro-513–Pro-540 and Lys-723–Gly-745. Residues Arg-746–Gly-755 show a composition bias toward basic residues. Polar residues predominate over residues Tyr-776–Ala-791. A compositionally biased stretch (low complexity) spans Ser-813–Ala-833. Over residues Arg-842 to Gln-852 the composition is skewed to basic residues. Positions Arg-920–Ala-929 are enriched in basic and acidic residues. Residues Ile-953–Pro-964 show a composition bias toward basic residues. The span at Ile-965–His-975 shows a compositional bias: basic and acidic residues. Low complexity-rich tracts occupy residues Asp-976–Ser-988 and Ser-1021–Ser-1031. At Ser-1021 the chain carries Phosphoserine; by PKA.

This sequence belongs to the JHDM1 histone demethylase family. JHDM1D subfamily.

It is found in the nucleus. The protein resides in the nucleolus. Its subcellular location is the chromosome. It localises to the centromere. The protein localises to the kinetochore. Its function is as follows. Lysine demethylase that demethylates both histones and non-histone proteins. Mediates demethylation of dimethylated 'Lys-9' of histone H3 (H3K9me2). Recruited to trimethylated 'Lys-4' of histone H3 (H3K4me3) at rDNA promoters and promotes expression of rDNA. This Danio rerio (Zebrafish) protein is Lysine-specific demethylase phf2 (phf2).